A 427-amino-acid chain; its full sequence is Gamma-glutamyl phosphate reductase (427 aa).

It belongs to the gamma-glutamyl phosphate reductase family.

It is found in the cytoplasm. The catalysed reaction is L-glutamate 5-semialdehyde + phosphate + NADP(+) = L-glutamyl 5-phosphate + NADPH + H(+). The protein operates within amino-acid biosynthesis; L-proline biosynthesis; L-glutamate 5-semialdehyde from L-glutamate: step 2/2. Catalyzes the NADPH-dependent reduction of L-glutamate 5-phosphate into L-glutamate 5-semialdehyde and phosphate. The product spontaneously undergoes cyclization to form 1-pyrroline-5-carboxylate. The polypeptide is Gamma-glutamyl phosphate reductase (Rhizobium meliloti (strain 1021) (Ensifer meliloti)).